Consider the following 102-residue polypeptide: NADH-quinone oxidoreductase subunit K (102 aa).

3 consecutive transmembrane segments (helical) span residues 2 to 22, 26 to 46, and 58 to 78; these read LDFY…GVIL, IFTI…IFAT, and VIVM…LALI.

It belongs to the complex I subunit 4L family. NDH-1 is composed of 14 different subunits. Subunits NuoA, H, J, K, L, M, N constitute the membrane sector of the complex.

It is found in the cell inner membrane. It catalyses the reaction a quinone + NADH + 5 H(+)(in) = a quinol + NAD(+) + 4 H(+)(out). In terms of biological role, NDH-1 shuttles electrons from NADH, via FMN and iron-sulfur (Fe-S) centers, to quinones in the respiratory chain. The immediate electron acceptor for the enzyme in this species is believed to be ubiquinone. Couples the redox reaction to proton translocation (for every two electrons transferred, four hydrogen ions are translocated across the cytoplasmic membrane), and thus conserves the redox energy in a proton gradient. This chain is NADH-quinone oxidoreductase subunit K, found in Campylobacter fetus subsp. fetus (strain 82-40).